The chain runs to 85 residues: U5-theraphotoxin-Hhn1a (85 aa).

The N-terminal stretch at 1–21 is a signal peptide; it reads MKSQIFFAVAALFLLTVRTYA. Positions 22 to 49 are excised as a propeptide; it reads SKSKEQDLRDALFSAMFSADNQLNPQER. 3 cysteine pairs are disulfide-bonded: C51-C65, C58-C70, and C64-C77.

The protein belongs to the neurotoxin 10 (Hwtx-1) family. 18 (Hntx-VII) subfamily. In terms of tissue distribution, expressed by the venom gland.

The protein resides in the secreted. In terms of biological role, ion channel impairing toxin that inhibits voltage-gated sodium channels. The recombinantly expressed toxin shows a weak activity against Nav1.7/SCN9A, and shifts the voltage dependence of channel activation to more depolarized potentials. In Cyriopagopus hainanus (Chinese bird spider), this protein is U5-theraphotoxin-Hhn1a.